Consider the following 453-residue polypeptide: Glutamyl-tRNA reductase (453 aa).

Residues 54–57 (TCNR), Ser-113, 118–120 (EAQ), and Gln-124 each bind substrate. The active-site Nucleophile is Cys-55. Position 193–198 (193–198 (GGGEVS)) interacts with NADP(+).

Belongs to the glutamyl-tRNA reductase family. Homodimer.

It catalyses the reaction (S)-4-amino-5-oxopentanoate + tRNA(Glu) + NADP(+) = L-glutamyl-tRNA(Glu) + NADPH + H(+). The protein operates within porphyrin-containing compound metabolism; protoporphyrin-IX biosynthesis; 5-aminolevulinate from L-glutamyl-tRNA(Glu): step 1/2. It participates in porphyrin-containing compound metabolism; chlorophyll biosynthesis. Its function is as follows. Catalyzes the NADPH-dependent reduction of glutamyl-tRNA(Glu) to glutamate 1-semialdehyde (GSA). The polypeptide is Glutamyl-tRNA reductase (Chloroflexus aggregans (strain MD-66 / DSM 9485)).